The primary structure comprises 367 residues: Probable butyrate kinase (367 aa).

It belongs to the acetokinase family.

It is found in the cytoplasm. It carries out the reaction butanoate + ATP = butanoyl phosphate + ADP. The sequence is that of Probable butyrate kinase from Bacillus anthracis (strain A0248).